The primary structure comprises 202 residues: Probable nicotinate-nucleotide adenylyltransferase (202 aa).

It belongs to the NadD family.

The catalysed reaction is nicotinate beta-D-ribonucleotide + ATP + H(+) = deamido-NAD(+) + diphosphate. Its pathway is cofactor biosynthesis; NAD(+) biosynthesis; deamido-NAD(+) from nicotinate D-ribonucleotide: step 1/1. In terms of biological role, catalyzes the reversible adenylation of nicotinate mononucleotide (NaMN) to nicotinic acid adenine dinucleotide (NaAD). This chain is Probable nicotinate-nucleotide adenylyltransferase, found in Clostridium perfringens (strain ATCC 13124 / DSM 756 / JCM 1290 / NCIMB 6125 / NCTC 8237 / Type A).